A 103-amino-acid polypeptide reads, in one-letter code: MAAAAMPLEELERWLQARVDRQPIATSLAMLDGYVAAIVAGPVSMSPLDWICPLLAIDADAFNHGDTPEFAAIFAVALRHNDISNVLRPRPTSSSRCTGANPW.

The chain crosses the membrane as a helical span at residues 33 to 57 (GYVAAIVAGPVSMSPLDWICPLLAI).

The protein resides in the membrane. This is an uncharacterized protein from Sinorhizobium fredii (strain NBRC 101917 / NGR234).